Here is a 277-residue protein sequence, read N- to C-terminus: Shikimate dehydrogenase (NADP(+)) (277 aa).

Residues 15 to 17 (SLS) and Thr-62 contribute to the shikimate site. The Proton acceptor role is filled by Lys-66. The shikimate site is built by Asn-87 and Asp-102. NADP(+) contacts are provided by residues 127–131 (GAGGA), 151–156 (NRTVDK), and Ile-219. Tyr-221 lines the shikimate pocket. Gly-242 is an NADP(+) binding site.

Belongs to the shikimate dehydrogenase family. As to quaternary structure, homodimer.

The enzyme catalyses shikimate + NADP(+) = 3-dehydroshikimate + NADPH + H(+). Its pathway is metabolic intermediate biosynthesis; chorismate biosynthesis; chorismate from D-erythrose 4-phosphate and phosphoenolpyruvate: step 4/7. Functionally, involved in the biosynthesis of the chorismate, which leads to the biosynthesis of aromatic amino acids. Catalyzes the reversible NADPH linked reduction of 3-dehydroshikimate (DHSA) to yield shikimate (SA). The polypeptide is Shikimate dehydrogenase (NADP(+)) (Bacillus thuringiensis subsp. konkukian (strain 97-27)).